Here is a 417-residue protein sequence, read N- to C-terminus: Serpin A3-7 (417 aa).

Residues 1 to 25 form the signal peptide; that stretch reads MRTERTSFLLALGLLVSGFCSRVHC. N-linked (GlcNAc...) asparagine glycosylation is found at asparagine 103, asparagine 183, asparagine 221, and asparagine 267.

The protein belongs to the serpin family. Homodimer.

The protein resides in the cytoplasmic vesicle. Its subcellular location is the secretory vesicle. The protein localises to the chromaffin granule. It is found in the secreted. Serine protease inhibitor. In Bos taurus (Bovine), this protein is Serpin A3-7.